A 250-amino-acid polypeptide reads, in one-letter code: MSISFSNVDFINSTIQSYLNRKLKSYGDPKYAYLIMNKKKPTDVVIISNYPTEWVDIYRNNNYQHIDPVILTAINKISPFSWDDDLVISSKLKFSRIFNLSKDYDIVNGYTFVLHDPGNNLAALSFMIEEHRSEELEEIIQNNKDKLQMLLISAHEKLTSLYREMSRNRNNSKSQEADLFSQRENEILHWASMGKTYQEIALILGITTSTVKFHIGNVVKKLGVLNAKHAIRLGVEMNLIKPVGPAKARS.

One can recognise an HTH luxR-type domain in the interval 173 to 238; the sequence is KSQEADLFSQ…HAIRLGVEMN (66 aa). The segment at residues 197–216 is a DNA-binding region (H-T-H motif); it reads YQEIALILGITTSTVKFHIG.

Belongs to the autoinducer-regulated transcriptional regulatory protein family.

Its function is as follows. Functions as an OHLL responsive transcriptional regulator that acts in virulence (soft rot disease) through the activation of genes for plant tissue macerating enzymes. This chain is Transcriptional activator protein ExpR (expR), found in Dickeya dadantii (strain 3937) (Erwinia chrysanthemi (strain 3937)).